Reading from the N-terminus, the 196-residue chain is V-type proton ATPase subunit E (196 aa).

This sequence belongs to the V-ATPase E subunit family.

Functionally, produces ATP from ADP in the presence of a proton gradient across the membrane. The polypeptide is V-type proton ATPase subunit E (Clostridium botulinum (strain Alaska E43 / Type E3)).